The chain runs to 120 residues: NAD(P)H-quinone oxidoreductase subunit 3 (120 aa).

3 helical membrane passes run 10 to 30, 64 to 84, and 89 to 109; these read LLVF…ASAL, MFAL…PWAV, and LGLL…VGLV.

Belongs to the complex I subunit 3 family. In terms of assembly, NDH-1 can be composed of about 15 different subunits; different subcomplexes with different compositions have been identified which probably have different functions.

Its subcellular location is the cellular thylakoid membrane. It carries out the reaction a plastoquinone + NADH + (n+1) H(+)(in) = a plastoquinol + NAD(+) + n H(+)(out). The catalysed reaction is a plastoquinone + NADPH + (n+1) H(+)(in) = a plastoquinol + NADP(+) + n H(+)(out). In terms of biological role, NDH-1 shuttles electrons from an unknown electron donor, via FMN and iron-sulfur (Fe-S) centers, to quinones in the respiratory and/or the photosynthetic chain. The immediate electron acceptor for the enzyme in this species is believed to be plastoquinone. Couples the redox reaction to proton translocation, and thus conserves the redox energy in a proton gradient. Cyanobacterial NDH-1 also plays a role in inorganic carbon-concentration. The sequence is that of NAD(P)H-quinone oxidoreductase subunit 3 from Synechococcus sp. (strain JA-3-3Ab) (Cyanobacteria bacterium Yellowstone A-Prime).